Consider the following 129-residue polypeptide: Small ribosomal subunit protein uS11 (129 aa).

It belongs to the universal ribosomal protein uS11 family. Part of the 30S ribosomal subunit. Interacts with proteins S7 and S18. Binds to IF-3.

Its function is as follows. Located on the platform of the 30S subunit, it bridges several disparate RNA helices of the 16S rRNA. Forms part of the Shine-Dalgarno cleft in the 70S ribosome. The sequence is that of Small ribosomal subunit protein uS11 from Francisella tularensis subsp. tularensis (strain FSC 198).